The sequence spans 571 residues: 2-succinyl-5-enolpyruvyl-6-hydroxy-3-cyclohexene-1-carboxylate synthase (571 aa).

This sequence belongs to the TPP enzyme family. MenD subfamily. As to quaternary structure, homodimer. Requires Mg(2+) as cofactor. Mn(2+) is required as a cofactor. The cofactor is thiamine diphosphate.

It catalyses the reaction isochorismate + 2-oxoglutarate + H(+) = 5-enolpyruvoyl-6-hydroxy-2-succinyl-cyclohex-3-ene-1-carboxylate + CO2. It participates in quinol/quinone metabolism; 1,4-dihydroxy-2-naphthoate biosynthesis; 1,4-dihydroxy-2-naphthoate from chorismate: step 2/7. The protein operates within quinol/quinone metabolism; menaquinone biosynthesis. Catalyzes the thiamine diphosphate-dependent decarboxylation of 2-oxoglutarate and the subsequent addition of the resulting succinic semialdehyde-thiamine pyrophosphate anion to isochorismate to yield 2-succinyl-5-enolpyruvyl-6-hydroxy-3-cyclohexene-1-carboxylate (SEPHCHC). This is 2-succinyl-5-enolpyruvyl-6-hydroxy-3-cyclohexene-1-carboxylate synthase from Vibrio parahaemolyticus serotype O3:K6 (strain RIMD 2210633).